Here is a 153-residue protein sequence, read N- to C-terminus: Transcription antitermination protein NusB (153 aa).

Belongs to the NusB family.

Involved in transcription antitermination. Required for transcription of ribosomal RNA (rRNA) genes. Binds specifically to the boxA antiterminator sequence of the ribosomal RNA (rrn) operons. The chain is Transcription antitermination protein NusB from Nitratidesulfovibrio vulgaris (strain ATCC 29579 / DSM 644 / CCUG 34227 / NCIMB 8303 / VKM B-1760 / Hildenborough) (Desulfovibrio vulgaris).